A 705-amino-acid polypeptide reads, in one-letter code: Polyribonucleotide nucleotidyltransferase (705 aa).

Mg(2+) is bound by residues Asp-486 and Asp-492. One can recognise a KH domain in the interval 553 to 612; sequence PRIHTMKVSQDKIRDIIGKGGATIRQLTEETGTTIEIEDDGTVKIAATSGEQAEDAINRI. The region spanning 622-690 is the S1 motif domain; it reads GTLYTGKVVR…RQGRVRLSIK (69 aa).

This sequence belongs to the polyribonucleotide nucleotidyltransferase family. Component of the RNA degradosome, which is a multiprotein complex involved in RNA processing and mRNA degradation. Requires Mg(2+) as cofactor.

The protein localises to the cytoplasm. The catalysed reaction is RNA(n+1) + phosphate = RNA(n) + a ribonucleoside 5'-diphosphate. In terms of biological role, involved in mRNA degradation. Catalyzes the phosphorolysis of single-stranded polyribonucleotides processively in the 3'- to 5'-direction. The protein is Polyribonucleotide nucleotidyltransferase of Colwellia psychrerythraea (strain 34H / ATCC BAA-681) (Vibrio psychroerythus).